A 266-amino-acid chain; its full sequence is uncharacterized protein (266 aa).

The N-terminal stretch at 1 to 22 (MGYLKRLVLYIVIMVMSVFIIG) is a signal peptide. The N-palmitoyl cysteine moiety is linked to residue C23. The S-diacylglycerol cysteine moiety is linked to residue C23.

This sequence belongs to the staphylococcal tandem lipoprotein family.

Its subcellular location is the cell membrane. This is an uncharacterized protein from Staphylococcus aureus (strain USA300).